The sequence spans 170 residues: Disulfide bond formation protein B (170 aa).

Residues 1-14 (MNDSTLALRRERRL) are Cytoplasmic-facing. A helical membrane pass occupies residues 15-31 (LMLLGWVCIALLAGALY). Residues 32–49 (LQYVKNEDPCPLCIIQRY) are Periplasmic-facing. The cysteines at positions 41 and 44 are disulfide-linked. The helical transmembrane segment at 50–64 (FFAAIGIFAFLAAGI) threads the bilayer. Residues 65–71 (RNWRVIW) lie on the Cytoplasmic side of the membrane. The helical transmembrane segment at 72 to 89 (VFELLIAIAAAGGVGTAA) threads the bilayer. At 90-144 (RHLSIQMNPGFSCGFDTLQPIVDSLPPAQWFPGMFKVAGLCETVYPPIFGILLPG) the chain is on the periplasmic side. An intrachain disulfide couples Cys102 to Cys130. Residues 145–163 (WALIGFAVILVAVASSLWR) form a helical membrane-spanning segment. Residues 164 to 170 (HRRKLAG) are Cytoplasmic-facing.

Belongs to the DsbB family.

The protein localises to the cell inner membrane. In terms of biological role, required for disulfide bond formation in some periplasmic proteins. Acts by oxidizing the DsbA protein. This is Disulfide bond formation protein B from Burkholderia ambifaria (strain ATCC BAA-244 / DSM 16087 / CCUG 44356 / LMG 19182 / AMMD) (Burkholderia cepacia (strain AMMD)).